An 87-amino-acid polypeptide reads, in one-letter code: UPF0473 protein Daud_0916 (87 aa).

It belongs to the UPF0473 family.

The protein is UPF0473 protein Daud_0916 of Desulforudis audaxviator (strain MP104C).